The primary structure comprises 446 residues: tRNA modification GTPase MnmE (446 aa).

(6S)-5-formyl-5,6,7,8-tetrahydrofolate-binding residues include R22, E80, and K119. Positions 215 to 370 constitute a TrmE-type G domain; sequence GLSLVIAGRP…LKKVIKQVVG (156 aa). N225 lines the K(+) pocket. Residues 225-230, 244-250, and 269-272 contribute to the GTP site; these read NAGKST, TEIAGTT, and DTAG. S229 serves as a coordination point for Mg(2+). T244, I246, and T249 together coordinate K(+). Mg(2+) is bound at residue T250. Residue K446 participates in (6S)-5-formyl-5,6,7,8-tetrahydrofolate binding.

The protein belongs to the TRAFAC class TrmE-Era-EngA-EngB-Septin-like GTPase superfamily. TrmE GTPase family. As to quaternary structure, homodimer. Heterotetramer of two MnmE and two MnmG subunits. The cofactor is K(+).

Its subcellular location is the cytoplasm. Exhibits a very high intrinsic GTPase hydrolysis rate. Involved in the addition of a carboxymethylaminomethyl (cmnm) group at the wobble position (U34) of certain tRNAs, forming tRNA-cmnm(5)s(2)U34. In Legionella pneumophila subsp. pneumophila (strain Philadelphia 1 / ATCC 33152 / DSM 7513), this protein is tRNA modification GTPase MnmE.